The following is a 563-amino-acid chain: Germacrene C/D synthase (563 aa).

The interval 1 to 22 (MESCLSVSSAPPPKKNIQEPVR) is disordered. Mg(2+) is bound by residues Asp-315, Asp-319, and Glu-468. A DDXXD motif motif is present at residues 315 to 319 (DDTYD).

The protein belongs to the terpene synthase family. Mg(2+) is required as a cofactor. As to expression, predominantly expressed in root.

The catalysed reaction is (2E,6E)-farnesyl diphosphate = germacrene C + diphosphate. The enzyme catalyses (2E,6E)-farnesyl diphosphate = (-)-germacrene D + diphosphate. Mediates formation of germacrene C and germacrene D using farnesyl diphosphate as substrate. Can also catalyze formation of trace of germacrene B. The sequence is that of Germacrene C/D synthase (TPS1) from Valeriana officinalis (Valerian).